Consider the following 420-residue polypeptide: Exodeoxyribonuclease 7 large subunit (420 aa).

It belongs to the XseA family. Heterooligomer composed of large and small subunits.

The protein resides in the cytoplasm. The catalysed reaction is Exonucleolytic cleavage in either 5'- to 3'- or 3'- to 5'-direction to yield nucleoside 5'-phosphates.. Its function is as follows. Bidirectionally degrades single-stranded DNA into large acid-insoluble oligonucleotides, which are then degraded further into small acid-soluble oligonucleotides. The polypeptide is Exodeoxyribonuclease 7 large subunit (Helicobacter acinonychis (strain Sheeba)).